We begin with the raw amino-acid sequence, 53 residues long: Conotoxin Ac4.3b (53 aa).

A propeptide spanning residues 1-11 (SDVRNAAVHER) is cleaved from the precursor. Gln-12 is subject to Pyrrolidone carboxylic acid. A 4-carboxyglutamate modification is found at Glu-14. The O-linked (HexNAc...) serine glycan is linked to Ser-18. 4-hydroxyproline occurs at positions 28, 33, and 48. Pro-48 carries the post-translational modification Proline amide. Positions 49-53 (GRRND) are excised as a propeptide.

It belongs to the conotoxin A superfamily. Post-translationally, contains 3 disulfide bonds. As to expression, expressed by the venom duct.

Its subcellular location is the secreted. Probable neurotoxin with ion channel inhibitor activity. The protein is Conotoxin Ac4.3b of Conus achatinus (Little frog cone).